The primary structure comprises 613 residues: RNA polymerase sigma factor RpoD (613 aa).

Positions 2-80 (EQNPQSQLKL…TADEDAAEAA (79 aa)) are sigma-70 factor domain-1. The interval 176–213 (PTATHVGSELSQEDLDDDEDEDEEDGDDDSADDDNSID) is disordered. The span at 186 to 212 (SQEDLDDDEDEDEEDGDDDSADDDNSI) shows a compositional bias: acidic residues. The segment at 379–449 (MVEANLRLVI…TRSIADQART (71 aa)) is sigma-70 factor domain-2. The Interaction with polymerase core subunit RpoC signature appears at 403 to 406 (DLIQ). Positions 458–534 (ETINKLNRIS…DTTLELPLDS (77 aa)) are sigma-70 factor domain-3. The sigma-70 factor domain-4 stretch occupies residues 547–600 (VLAGLTAREAKVLRMRFGIDMNTDYTLEEVGKQFDVTRERIRQIEAKALRKLRH). The H-T-H motif DNA-binding region spans 573-592 (LEEVGKQFDVTRERIRQIEA). An interaction with anti-sigma factors region spans residues 584 to 599 (RERIRQIEAKALRKLR).

This sequence belongs to the sigma-70 factor family. RpoD/SigA subfamily. In terms of assembly, interacts transiently with the RNA polymerase catalytic core formed by RpoA, RpoB, RpoC and RpoZ (2 alpha, 1 beta, 1 beta' and 1 omega subunit) to form the RNA polymerase holoenzyme that can initiate transcription. Identified in a complex containing RpoD, the RNA polymerase subunits RpoA, RpoB and RpoZ, CRP and DNA. Interacts with Rsd; this prevents interaction with the RNA polymerase catalytic core and with promoter DNA, and as a consequence, promotes transcription from promoters that require alternative sigma factors. Interacts with phage T4 AsiA; this interferes with binding to DNA and to the RNA polymerase. (Microbial infection) Interacts with Escherichia phage lambda antitermination protein Q.

Its subcellular location is the cytoplasm. Functionally, sigma factors are initiation factors that promote the attachment of RNA polymerase to specific initiation sites and are then released. This sigma factor is the primary sigma factor during exponential growth. Preferentially transcribes genes associated with fast growth, such as ribosomal operons, other protein-synthesis related genes, rRNA- and tRNA-encoding genes and prfB. This Escherichia coli (strain K12) protein is RNA polymerase sigma factor RpoD.